The primary structure comprises 431 residues: Dihydroorotase (431 aa).

His-59 and His-61 together coordinate Zn(2+). Residues 61–63 and Asn-93 contribute to the substrate site; that span reads HLR. Residues Asp-151, His-178, His-231, and Asp-304 each contribute to the Zn(2+) site. The active site involves Asp-304. Residues His-308 and 322–323 each bind substrate; that span reads FG.

The protein belongs to the metallo-dependent hydrolases superfamily. DHOase family. Class I DHOase subfamily. Requires Zn(2+) as cofactor.

It catalyses the reaction (S)-dihydroorotate + H2O = N-carbamoyl-L-aspartate + H(+). The protein operates within pyrimidine metabolism; UMP biosynthesis via de novo pathway; (S)-dihydroorotate from bicarbonate: step 3/3. Catalyzes the reversible cyclization of carbamoyl aspartate to dihydroorotate. In Caldanaerobacter subterraneus subsp. tengcongensis (strain DSM 15242 / JCM 11007 / NBRC 100824 / MB4) (Thermoanaerobacter tengcongensis), this protein is Dihydroorotase.